The following is a 166-amino-acid chain: PTS system glucose-specific EIIA component (166 aa).

The PTS EIIA type-1 domain maps to 34–138 (DPVFAQKMMG…SIISPIIITN (105 aa)). 2 residues coordinate Zn(2+): His71 and His86. His86 acts as the Tele-phosphohistidine intermediate; for EIIA activity in catalysis. His86 is modified (phosphohistidine; by HPr).

Heterodimer with glycerol kinase (glpk). Zn(2+) is required as a cofactor.

It is found in the cytoplasm. The phosphoenolpyruvate-dependent sugar phosphotransferase system (sugar PTS), a major carbohydrate active transport system, catalyzes the phosphorylation of incoming sugar substrates concomitantly with their translocation across the cell membrane. The enzyme II complex composed of PtsG and Crr is involved in glucose transport. This chain is PTS system glucose-specific EIIA component (crr), found in Staphylococcus epidermidis (strain ATCC 35984 / DSM 28319 / BCRC 17069 / CCUG 31568 / BM 3577 / RP62A).